Here is a 476-residue protein sequence, read N- to C-terminus: UDP-N-acetylmuramate--L-alanine ligase (476 aa).

123 to 129 (GTHGKTT) contributes to the ATP binding site.

It belongs to the MurCDEF family.

The protein resides in the cytoplasm. It carries out the reaction UDP-N-acetyl-alpha-D-muramate + L-alanine + ATP = UDP-N-acetyl-alpha-D-muramoyl-L-alanine + ADP + phosphate + H(+). It participates in cell wall biogenesis; peptidoglycan biosynthesis. In terms of biological role, cell wall formation. The protein is UDP-N-acetylmuramate--L-alanine ligase of Nitrosococcus oceani (strain ATCC 19707 / BCRC 17464 / JCM 30415 / NCIMB 11848 / C-107).